The chain runs to 319 residues: Acetyl-coenzyme A carboxylase carboxyl transferase subunit alpha (319 aa).

Positions 35-292 (EISKLMRRLV…KKTIAEALAE (258 aa)) constitute a CoA carboxyltransferase C-terminal domain.

This sequence belongs to the AccA family. Acetyl-CoA carboxylase is a heterohexamer composed of biotin carboxyl carrier protein (AccB), biotin carboxylase (AccC) and two subunits each of ACCase subunit alpha (AccA) and ACCase subunit beta (AccD).

The protein localises to the cytoplasm. The enzyme catalyses N(6)-carboxybiotinyl-L-lysyl-[protein] + acetyl-CoA = N(6)-biotinyl-L-lysyl-[protein] + malonyl-CoA. It participates in lipid metabolism; malonyl-CoA biosynthesis; malonyl-CoA from acetyl-CoA: step 1/1. Its function is as follows. Component of the acetyl coenzyme A carboxylase (ACC) complex. First, biotin carboxylase catalyzes the carboxylation of biotin on its carrier protein (BCCP) and then the CO(2) group is transferred by the carboxyltransferase to acetyl-CoA to form malonyl-CoA. The protein is Acetyl-coenzyme A carboxylase carboxyl transferase subunit alpha of Desulfitobacterium hafniense (strain DSM 10664 / DCB-2).